Here is a 380-residue protein sequence, read N- to C-terminus: Cytochrome b (380 aa).

4 consecutive transmembrane segments (helical) span residues 34-54 (FGSL…LLAM), 78-99 (WLIR…FLHI), 114-134 (WNTG…GYVL), and 179-199 (FFAL…IHLT). 2 residues coordinate heme b: histidine 84 and histidine 98. Heme b is bound by residues histidine 183 and histidine 197. Histidine 202 provides a ligand contact to a ubiquinone. 4 consecutive transmembrane segments (helical) span residues 227-247 (LKDI…ALFS), 289-309 (LGGV…PFLH), 321-341 (LSQI…WIGS), and 348-368 (FIII…ILFP).

The protein belongs to the cytochrome b family. The cytochrome bc1 complex contains 11 subunits: 3 respiratory subunits (MT-CYB, CYC1 and UQCRFS1), 2 core proteins (UQCRC1 and UQCRC2) and 6 low-molecular weight proteins (UQCRH/QCR6, UQCRB/QCR7, UQCRQ/QCR8, UQCR10/QCR9, UQCR11/QCR10 and a cleavage product of UQCRFS1). This cytochrome bc1 complex then forms a dimer. Heme b serves as cofactor.

It localises to the mitochondrion inner membrane. In terms of biological role, component of the ubiquinol-cytochrome c reductase complex (complex III or cytochrome b-c1 complex) that is part of the mitochondrial respiratory chain. The b-c1 complex mediates electron transfer from ubiquinol to cytochrome c. Contributes to the generation of a proton gradient across the mitochondrial membrane that is then used for ATP synthesis. The protein is Cytochrome b (MT-CYB) of Polyplectron bicalcaratum (Grey peacock-pheasant).